The following is a 292-amino-acid chain: Feruloyl esterase B (292 aa).

A signal peptide spans 1–18; that stretch reads MLPRTLLGLALTAATGLC. N-linked (GlcNAc...) asparagine glycans are attached at residues asparagine 88, asparagine 117, asparagine 179, and asparagine 245.

It belongs to the carbohydrate esterase 1 (CE1) family. Feruloyl esterase type B subfamily.

It is found in the secreted. The enzyme catalyses feruloyl-polysaccharide + H2O = ferulate + polysaccharide.. In terms of biological role, involved in degradation of plant cell walls. Hydrolyzes of the feruloyl-arabinose ester bond in arabinoxylans as well as the feruloyl-galactose and feruloyl-arabinose ester bonds in pectin. In Neurospora crassa (strain ATCC 24698 / 74-OR23-1A / CBS 708.71 / DSM 1257 / FGSC 987), this protein is Feruloyl esterase B (fae-1).